Reading from the N-terminus, the 58-residue chain is Small ribosomal subunit protein bS21 (58 aa).

Residues 25–58 (SKSGTLQEYRKREHYEKPSVKRKKKSEAARKRKF) are disordered. Basic and acidic residues predominate over residues 32-43 (EYRKREHYEKPS). A compositionally biased stretch (basic residues) spans 44–58 (VKRKKKSEAARKRKF).

Belongs to the bacterial ribosomal protein bS21 family.

This Oceanobacillus iheyensis (strain DSM 14371 / CIP 107618 / JCM 11309 / KCTC 3954 / HTE831) protein is Small ribosomal subunit protein bS21.